Consider the following 291-residue polypeptide: MLKDLFKKSKYATVNPSAYKSKVVEEKPNIPSGMWTKCSNCNSMIYYEDLENNKYVCTKCNQHFRISPKERIKQIFDKDTFKEMWKSLKTNNPIDFEDYEEKINKSQSNTGSKEAVVTGVGRINDLEVACAIMDSFFMMGSMGTVVGEKITRIVEYATENNLPILIFTASGGARMQEGIFSLMQMAKISAALARHDEKGLLYITILTDPTTGGVTASFAMEGDIILSEPNTLVGFAGRRVIENTINETLPESFQKSEFLLEKGFIDSIVERKNMRAYLYKILILHGVNKYE.

The 258-residue stretch at 34-291 (MWTKCSNCNS…LILHGVNKYE (258 aa)) folds into the CoA carboxyltransferase N-terminal domain. Zn(2+) is bound by residues cysteine 38, cysteine 41, cysteine 57, and cysteine 60. The C4-type zinc finger occupies 38 to 60 (CSNCNSMIYYEDLENNKYVCTKC).

The protein belongs to the AccD/PCCB family. As to quaternary structure, acetyl-CoA carboxylase is a heterohexamer composed of biotin carboxyl carrier protein (AccB), biotin carboxylase (AccC) and two subunits each of ACCase subunit alpha (AccA) and ACCase subunit beta (AccD). It depends on Zn(2+) as a cofactor.

The protein resides in the cytoplasm. The enzyme catalyses N(6)-carboxybiotinyl-L-lysyl-[protein] + acetyl-CoA = N(6)-biotinyl-L-lysyl-[protein] + malonyl-CoA. It functions in the pathway lipid metabolism; malonyl-CoA biosynthesis; malonyl-CoA from acetyl-CoA: step 1/1. Component of the acetyl coenzyme A carboxylase (ACC) complex. Biotin carboxylase (BC) catalyzes the carboxylation of biotin on its carrier protein (BCCP) and then the CO(2) group is transferred by the transcarboxylase to acetyl-CoA to form malonyl-CoA. The polypeptide is Acetyl-coenzyme A carboxylase carboxyl transferase subunit beta (Clostridium botulinum (strain Alaska E43 / Type E3)).